We begin with the raw amino-acid sequence, 484 residues long: Serine hydroxymethyltransferase, cytosolic (484 aa).

Alanine 2 is subject to N-acetylalanine. Residue asparagine 6 is modified to Deamidated asparagine; alternate. A cross-link (isoaspartyl glycine isopeptide (Asn-Gly); alternate) is located at residues 6–7 (NG). Cysteine 204 functions as the Nucleophile in the catalytic mechanism. Histidine 256 (proton donor) is an active-site residue. The residue at position 257 (lysine 257) is an N6-(pyridoxal phosphate)lysine.

This sequence belongs to the SHMT family. In terms of assembly, homotetramer. Identified in complex with ABRAXAS2 and the other subunits of the BRISC complex, at least composed of ABRAXAS2, BRCC3/BRCC36, BABAM2 and BABAM1/NBA1. Pyridoxal 5'-phosphate is required as a cofactor. Deamidation of asparagine produces alternatively aspartate or isoaspartate, which in turn can be converted to aspartate through carboxylmethylation/demethylation.

It is found in the cytoplasm. It carries out the reaction (6R)-5,10-methylene-5,6,7,8-tetrahydrofolate + glycine + H2O = (6S)-5,6,7,8-tetrahydrofolate + L-serine. It functions in the pathway one-carbon metabolism; tetrahydrofolate interconversion. Its function is as follows. Interconversion of serine and glycine. In Oryctolagus cuniculus (Rabbit), this protein is Serine hydroxymethyltransferase, cytosolic (SHMT1).